The sequence spans 337 residues: Exopolysaccharide phosphotransferase cps2G (337 aa).

The protein belongs to the stealth family.

The protein is Exopolysaccharide phosphotransferase cps2G (cps2G) of Lactiplantibacillus plantarum (strain ATCC BAA-793 / NCIMB 8826 / WCFS1) (Lactobacillus plantarum).